The sequence spans 780 residues: MAAPPDLQDEPLSLGSPGSQWFGGRGDGEDEATAVMGARPAQQDGEPAWGSGAGAGVTSSRELCSGPARSPPVAMETASTGMAAVPDALDHSPSSTLKDGEGACYTSLISDVCYPPREDSAYFTGILQKENGHITTSESPEEPETPGPSLPEVPGMEPQGLLSSDSGIEMTPAESTEVNKILADPLDQMKAEAYKYIDITRPQEAKGQEEQHPGLEDKDLDFKDKDTEVSTKAEGVRAPNQPAPVEGKLIKDHLFEESTFAPYIDELSDEQHRVSLVTAPVKITLTEIEPPLMTATQETIPEKQDLCLKPSPDTVPTVTVSEPEDDSPGSVTPPSSGTEPSAAESQGKGSVSEDELIAAIKEAKGLSYETTESPRPVGQVADKPKTKTRSGLPTIPSPLDQEASSAESGDSEIELVSEDPMASEDALPSGYVSFGHVSGPPPSPASPSIQYSILREEREAELDSELIIESCDASSASEESPKREQDSPPMKPGALDAIREETGSRATEERAPSHQGPVEPDPMLSFAPAAALQSRPEPSSGDGASVPEPPRSQQQKPEEEAVSSSQSPTATEIPGPLGSGLMPPLPFFNKQKAIDLLYWRDIKQTGIVFGSFLLLLFSLTQFSVVSVVAYLALAALSATISFRIYKSVLQAVQKTDEGHPFKAYLELEITLSQEQIQKYTDCLQLYVNSTLKELRRLFLVQDLVDSLKFAVLMWLLTYVGALFNGLTLLLMAVVSMFTLPVVYVKHQAQVDQYLGLVRTHINTVVAKIQAKIPGAKRHAE.

Disordered regions lie at residues 1 to 76 (MAAP…VAME), 128 to 176 (QKEN…AEST), 201 to 223 (RPQE…LDFK), and 293 to 576 (MTAT…IPGP). Ser13 and Ser70 each carry phosphoserine. Position 327 is a phosphoserine (Ser327). Residues 328–341 (PGSVTPPSSGTEPS) are compositionally biased toward low complexity. Ser350, Ser352, and Ser487 each carry phosphoserine. A compositionally biased stretch (basic and acidic residues) spans 497-512 (AIREETGSRATEERAP). The 188-residue stretch at 593 to 780 (AIDLLYWRDI…KIPGAKRHAE (188 aa)) folds into the Reticulon domain. 2 helical membrane-spanning segments follow: residues 607 to 627 (IVFG…VVSV) and 709 to 729 (FAVL…LTLL).

In terms of assembly, interacts with NDRG1. Interacts with BACE1. Interacts with TMEM33.

The protein localises to the endoplasmic reticulum membrane. It is found in the golgi apparatus membrane. Its function is as follows. Inhibits amyloid precursor protein processing, probably by blocking BACE1 activity. The protein is Reticulon-1 (Rtn1) of Mus musculus (Mouse).